A 234-amino-acid chain; its full sequence is GTP cyclohydrolase 1 (234 aa).

Residues 1–26 (MDALIKPLRAGKPDAKPADPKGTEFR) are disordered. Basic and acidic residues predominate over residues 11-26 (GKPDAKPADPKGTEFR). Zn(2+) contacts are provided by Cys-123, His-126, and Cys-194.

It belongs to the GTP cyclohydrolase I family. Toroid-shaped homodecamer, composed of two pentamers of five dimers.

The enzyme catalyses GTP + H2O = 7,8-dihydroneopterin 3'-triphosphate + formate + H(+). It functions in the pathway cofactor biosynthesis; 7,8-dihydroneopterin triphosphate biosynthesis; 7,8-dihydroneopterin triphosphate from GTP: step 1/1. The sequence is that of GTP cyclohydrolase 1 from Rhodopseudomonas palustris (strain BisB18).